A 336-amino-acid chain; its full sequence is uncharacterized protein (336 aa).

NADP(+) contacts are provided by Lys39 and Tyr166.

This sequence belongs to the NAD(P)-dependent epimerase/dehydratase family. Dihydroflavonol-4-reductase subfamily.

Its subcellular location is the cytoplasm. The protein localises to the nucleus. This is an uncharacterized protein from Schizosaccharomyces pombe (strain 972 / ATCC 24843) (Fission yeast).